The following is a 132-amino-acid chain: MALLLTTVIALTCLGGFASPSPVPRSTALKELIEELVNITQNQKAPLCNGSMVWSINLTAGVYCAALESLINVSGCSAIEKTQRMLNGFCPHKVSAGQFSSLRVRDTKIEVAQFVKDLLVHLKKLFREGRFN.

The signal sequence occupies residues M1–A18. Residues N38, N49, N57, and N72 are each glycosylated (N-linked (GlcNAc...) asparagine). Disulfide bonds link C48-C76 and C64-C90.

It belongs to the IL-4/IL-13 family. As to quaternary structure, interacts with IL13RA2.

Its subcellular location is the secreted. Cytokine that plays important roles in allergic inflammation and immune response to parasite infection. Synergizes with IL2 in regulating interferon-gamma synthesis. Stimulates B-cell proliferation, and activation of eosinophils, basophils, and mast cells. Plays an important role in controlling IL33 activity by modulating the production of transmembrane and soluble forms of interleukin-1 receptor-like 1/IL1RL1. Displays the capacity to antagonize Th1-driven proinflammatory immune response and downregulates synthesis of many proinflammatory cytokines including IL1, IL6, IL10, IL12 and TNF-alpha through a mechanism that partially involves suppression of NF-kappa-B. Also functions on nonhematopoietic cells, including endothelial cells where it induces vascular cell adhesion protein 1/VCAM1, which is important in the recruitment of eosinophils. Exerts its biological effects through its receptors which comprises the IL4R chain and the IL13RA1 chain, to activate JAK1 and TYK2, leading to the activation of STAT6. Aside from IL13RA1, another receptor IL13RA2 acts as a high affinity decoy for IL13 and mediates internalization and depletion of extracellular IL13. This chain is Interleukin-13 (IL13), found in Macaca mulatta (Rhesus macaque).